A 2221-amino-acid polypeptide reads, in one-letter code: RNA-directed RNA polymerase L (2221 aa).

The segment at 29–292 is endonuclease; the sequence is KTVLLSQVNF…SERETLIEAE (264 aa). The Mn(2+) site is built by Glu54, Asp91, and Glu104. Lys117 is an active-site residue. The RdRp catalytic domain occupies 1171-1369; it reads LDMKSVVRLS…YLSSKLNKFI (199 aa). Residue Asp1327 participates in Mg(2+) binding.

This sequence belongs to the Bunyavirales RNA polymerase family. As to quaternary structure, homomultimer; the oligomeric structure is essential for the polymerase activity. Interacts with nucleoprotein N. Interacts with protein Z; this interaction inhibits viral transcription and replication, Z partially blocks the product exit tunnel for the releasing nascent RNA product. Requires Mn(2+) as cofactor. Mg(2+) is required as a cofactor.

Its subcellular location is the virion. The protein localises to the host cytoplasm. It catalyses the reaction RNA(n) + a ribonucleoside 5'-triphosphate = RNA(n+1) + diphosphate. RNA-dependent RNA polymerase, which is responsible for the replication and transcription of the viral RNA genome using antigenomic RNA as an intermediate. During transcription, synthesizes subgenomic RNAs and assures their capping by a cap-snatching mechanism, which involves the endonuclease activity cleaving the host capped pre-mRNAs. These short capped RNAs are then used as primers for viral transcription. The 3'-end of subgenomic mRNAs molecules are heterogeneous and not polyadenylated. The replicase function is to direct synthesis of antigenomic and genomic RNA which are encapsidated and non capped. As a consequence of the use of the same enzyme for both transcription and replication, these mechanisms need to be well coordinated. These processes may be regulated by proteins N and Z in a dose-dependent manner. Z protein inhibits the viral polymerase L und thus the viral transcription and RNA synthesis. The sequence is that of RNA-directed RNA polymerase L from Sigmodon hispidus (Hispid cotton rat).